The chain runs to 203 residues: Small ribosomal subunit protein uS4 (203 aa).

Positions 93–156 (RRLDNVVYRL…MKVPAILEAV (64 aa)) constitute an S4 RNA-binding domain.

The protein belongs to the universal ribosomal protein uS4 family. Part of the 30S ribosomal subunit. Contacts protein S5. The interaction surface between S4 and S5 is involved in control of translational fidelity.

One of the primary rRNA binding proteins, it binds directly to 16S rRNA where it nucleates assembly of the body of the 30S subunit. In terms of biological role, with S5 and S12 plays an important role in translational accuracy. This Streptococcus equi subsp. equi (strain 4047) protein is Small ribosomal subunit protein uS4.